Reading from the N-terminus, the 201-residue chain is Small ribosomal subunit protein uS4 (201 aa).

The region spanning 92 to 155 (RRLDAVVYAL…QKLDIIQESV (64 aa)) is the S4 RNA-binding domain.

This sequence belongs to the universal ribosomal protein uS4 family. In terms of assembly, part of the 30S ribosomal subunit. Contacts protein S5. The interaction surface between S4 and S5 is involved in control of translational fidelity.

Functionally, one of the primary rRNA binding proteins, it binds directly to 16S rRNA where it nucleates assembly of the body of the 30S subunit. Its function is as follows. With S5 and S12 plays an important role in translational accuracy. This chain is Small ribosomal subunit protein uS4, found in Staphylococcus carnosus (strain TM300).